An 82-amino-acid polypeptide reads, in one-letter code: MFSSLKNKLNTFKSTLSLGVFLLFSAFANQALAAADAGLVTEVTKTLGTSKDTVIALGPLIMGVVGAIVLIVTVIGLIRKAK.

A signal peptide spans 1-33 (MFSSLKNKLNTFKSTLSLGVFLLFSAFANQALA).

The protein resides in the secreted. This is Colonization factor (cep) from Vibrio cholerae serotype O1 (strain ATCC 39315 / El Tor Inaba N16961).